The following is a 65-amino-acid chain: Metallothionein-B (65 aa).

It belongs to the metallothionein superfamily. Type 4 family.

In terms of biological role, metallothioneins have a high content of cysteine residues that bind various heavy metals. The protein is Metallothionein-B (MTB1) of Strongylocentrotus purpuratus (Purple sea urchin).